The sequence spans 282 residues: Bifunctional protein FolD (282 aa).

Residues 164–166 (GRS) and Ser-189 each bind NADP(+).

It belongs to the tetrahydrofolate dehydrogenase/cyclohydrolase family. In terms of assembly, homodimer.

It carries out the reaction (6R)-5,10-methylene-5,6,7,8-tetrahydrofolate + NADP(+) = (6R)-5,10-methenyltetrahydrofolate + NADPH. It catalyses the reaction (6R)-5,10-methenyltetrahydrofolate + H2O = (6R)-10-formyltetrahydrofolate + H(+). Its pathway is one-carbon metabolism; tetrahydrofolate interconversion. Functionally, catalyzes the oxidation of 5,10-methylenetetrahydrofolate to 5,10-methenyltetrahydrofolate and then the hydrolysis of 5,10-methenyltetrahydrofolate to 10-formyltetrahydrofolate. In Streptococcus suis (strain 05ZYH33), this protein is Bifunctional protein FolD.